We begin with the raw amino-acid sequence, 600 residues long: Elongation factor 4 (600 aa).

The region spanning 5–187 (KYIRNFSIIA…AIVSKLPPPK (183 aa)) is the tr-type G domain. Residues 17–22 (DHGKST) and 134–137 (NKLD) each bind GTP.

The protein belongs to the TRAFAC class translation factor GTPase superfamily. Classic translation factor GTPase family. LepA subfamily.

The protein localises to the cell inner membrane. It catalyses the reaction GTP + H2O = GDP + phosphate + H(+). Required for accurate and efficient protein synthesis under certain stress conditions. May act as a fidelity factor of the translation reaction, by catalyzing a one-codon backward translocation of tRNAs on improperly translocated ribosomes. Back-translocation proceeds from a post-translocation (POST) complex to a pre-translocation (PRE) complex, thus giving elongation factor G a second chance to translocate the tRNAs correctly. Binds to ribosomes in a GTP-dependent manner. The sequence is that of Elongation factor 4 from Rickettsia rickettsii (strain Iowa).